The primary structure comprises 130 residues: MMKLIQLCILFWCWRAICCHSCELTNITISVEKEECRFCISINTTWCAGYCYTRDLVYKDPARPNTQKVCTFKELVYETVRLPGCARHSDSLYTYPVATECHCGKCDSDSTDCTVRGLGPSYCSFSEMKE.

An N-terminal signal peptide occupies residues 1 to 20 (MMKLIQLCILFWCWRAICCH). Disulfide bonds link Cys-22/Cys-70, Cys-36/Cys-85, Cys-39/Cys-123, Cys-47/Cys-101, Cys-51/Cys-103, and Cys-106/Cys-113. Residues Asn-26 and Asn-43 are each glycosylated (N-linked (GlcNAc...) asparagine).

The protein belongs to the glycoprotein hormones subunit beta family. Heterodimer. The active follitropin is a heterodimer composed of an alpha chain/CGA shared with other hormones and a unique beta chain/FSHB shown here.

Its subcellular location is the secreted. Together with the alpha chain CGA constitutes follitropin, the follicle-stimulating hormone, and provides its biological specificity to the hormone heterodimer. Binds FSHR, a G protein-coupled receptor, on target cells to activate downstream signaling pathways. Follitropin is involved in follicle development and spermatogenesis in reproductive organs. This Mus musculus (Mouse) protein is Follitropin subunit beta (Fshb).